Reading from the N-terminus, the 139-residue chain is Succinate dehydrogenase assembly factor 2, mitochondrial (139 aa).

The transit peptide at 1 to 28 directs the protein to the mitochondrion; that stretch reads MLRKTNLSNITTLLRSARCMNRMPQLRF.

The protein belongs to the SDHAF2 family. Interacts with the flavoprotein subunit within the SDH catalytic dimer.

Its subcellular location is the mitochondrion. It is found in the mitochondrion matrix. Plays an essential role in the assembly of succinate dehydrogenase (SDH), an enzyme complex (also referred to as respiratory complex II) that is a component of both the tricarboxylic acid (TCA) cycle and the mitochondrial electron transport chain, and which couples the oxidation of succinate to fumarate with the reduction of ubiquinone (coenzyme Q) to ubiquinol. Required for flavinylation (covalent attachment of FAD) of the flavoprotein subunit of the SDH catalytic dimer. The chain is Succinate dehydrogenase assembly factor 2, mitochondrial from Schizosaccharomyces pombe (strain 972 / ATCC 24843) (Fission yeast).